The sequence spans 708 residues: ABC transporter G family member 18 (708 aa).

The ABC transporter domain maps to 75–317; that stretch reads RRRFDFSRRK…FSSFGRPIPE (243 aa). ATP is bound at residue 109–116; that stretch reads GGSGAGKS. The ABC transmembrane type-2 domain maps to 402-612; that stretch reads AETFILAKRY…PYEAVLINEF (211 aa). 7 consecutive transmembrane segments (helical) span residues 421 to 441, 456 to 476, 508 to 528, 537 to 557, 560 to 580, 589 to 609, and 681 to 701; these read LIGMRIGTVMVTGLLLATVYW, FFAFGMSTMFYCCADNIPVFI, LLALSIAFAATTFWTVGLSGG, LIIYAAFWSGSSIVTFISGLI, VMMSYMVTIAYLSYCLLLGGF, LYWIWFHYISLLKYPYEAVLI, and LWITLAWGLFFRILFYLSLLF.

It belongs to the ABC transporter superfamily. ABCG family. Eye pigment precursor importer (TC 3.A.1.204) subfamily.

It localises to the membrane. The sequence is that of ABC transporter G family member 18 (ABCG18) from Arabidopsis thaliana (Mouse-ear cress).